The primary structure comprises 506 residues: U3 small nucleolar RNA-associated protein 18 homolog (506 aa).

The segment covering 1–11 has biased composition (acidic residues); the sequence is MSSDESSDGLE. Disordered regions lie at residues 1–44 and 69–126; these read MSSD…SQAK and AKSV…PLNH. The segment covering 24 to 37 has biased composition (basic and acidic residues); sequence EQEKPAKIKRERYI. Phosphoserine is present on residues Ser-102, Ser-104, Ser-164, and Ser-165. WD repeat units follow at residues 203–242, 331–370, 372–413, and 469–505; these read YAEGNATSIQFHPTSTAALVAGMNGLATIYAVDGQKNERL, KQEGKVKGFTWSSDSKRILVCGSTSNVSVLNLRQNLIEHI, MDDG…ASKA, and EKVGFVTSMAFSPHSSFLAFATKGKQVPLFRLKYFKG.

It belongs to the WD repeat UTP18 family. Component of U3 snoRNP complex.

The protein localises to the nucleus. It localises to the nucleolus. In terms of biological role, component of a nucleolar small nuclear ribonucleoprotein particle (snoRNP) thought to participate in the processing and modification of pre-ribosomal RNA. Regulation of cell size by ribosome synthesis is an important parameter for stem cell maintenance and function. The polypeptide is U3 small nucleolar RNA-associated protein 18 homolog (wcd) (Drosophila melanogaster (Fruit fly)).